Consider the following 385-residue polypeptide: Trans-enoyl reductase poxH (385 aa).

Residue 64-67 (QPYS) coordinates NADP(+). A substrate-binding site is contributed by 156-163 (PDPAAPPI). Residues 199–202 (STSV), 223–226 (SGTD), Tyr241, and 289–290 (LG) contribute to the NADP(+) site. Residue 309 to 313 (HMAPL) participates in substrate binding. Residue 372–373 (KR) participates in NADP(+) binding.

This sequence belongs to the zinc-containing alcohol dehydrogenase family. In terms of assembly, monomer.

It participates in secondary metabolite biosynthesis. Trans-enoyl reductase; part of the gene cluster that mediates the biosynthesis of oxaleimides, cytotoxic compounds containing an unusual disubstituted succinimide moiety. The first step of the pathway is provided by the HR-PKS poxF that serves in a new mode of collaborative biosynthesis with the PKS-NRPS poxE, by providing the olefin containing amino acid substrate via the synthesis of an ACP-bound dec-4-enoate. The cytochrome P450 monooxygenase poxM-catalyzed oxidation at the alpha-position creates the enzyme-bound 2-hydroxydec-4-enoyl-ACP thioester, which may be prone to spontaneous hydrolysis to yield 2-hydroxydec-4-enoic acid due to increased electrophilicity of the carbonyl. 2-hydroxydec-4-enoic acid can then be further oxidized by poxM to yield the alpha-ketoacid 2-oxodec-4-enoicacid, which is reductively aminated by the aminotransferase poxL to yield (S,E)-2-aminodec-4-enoic acid. The Hybrid PKS-NRPS synthetase poxE then performs condensation between the octaketide product of its PKS modules and the amino group of (S,E)-2-aminodec-4-enoic acid which is activated and incorporated by the adenylation domain. The resulting aminoacyl product can be cyclized by the Diels-Alderase PoxQ and reductively released by the reductive (R) domain of poxE to yield an aldehyde intermediate. The released aldehyde is then substrate for a Knoevenagel condensation by the hydrolyase poxO followed by an oxidation at the 5-position of the pyrrolidone ring. The presence of the olefin from the amino acid building block allows for migration of the substituted allyl group to occur. This allylic transposition reaction takes place in a conjugate addition, semipinacol-like fashion to yield a succinimide intermediate. Iterative two-electron oxidations of the C7 methyl of the succinimide intermediate to the carboxylic acid can be catalyzed by one of two remaining cytochrome P450 monooxygenasess poxC or poxD to yield oxaleimide A. Subsequent oxidation yields the maleimide scaffold oxaleimide I. Both oxaleimide A and oxaleimide I can undergo oxidative modifications in the decalin ring to yield the series of products oxaleimides B to H. The chain is Trans-enoyl reductase poxH from Penicillium oxalicum.